Consider the following 209-residue polypeptide: ATP-dependent Clp protease proteolytic subunit 1 (209 aa).

Catalysis depends on Ser109, which acts as the Nucleophile. Residue His134 is part of the active site.

It belongs to the peptidase S14 family. Fourteen ClpP subunits assemble into 2 heptameric rings which stack back to back to give a disk-like structure with a central cavity, resembling the structure of eukaryotic proteasomes.

The protein resides in the cytoplasm. It carries out the reaction Hydrolysis of proteins to small peptides in the presence of ATP and magnesium. alpha-casein is the usual test substrate. In the absence of ATP, only oligopeptides shorter than five residues are hydrolyzed (such as succinyl-Leu-Tyr-|-NHMec, and Leu-Tyr-Leu-|-Tyr-Trp, in which cleavage of the -Tyr-|-Leu- and -Tyr-|-Trp bonds also occurs).. Cleaves peptides in various proteins in a process that requires ATP hydrolysis. Has a chymotrypsin-like activity. Plays a major role in the degradation of misfolded proteins. The protein is ATP-dependent Clp protease proteolytic subunit 1 of Corynebacterium diphtheriae (strain ATCC 700971 / NCTC 13129 / Biotype gravis).